A 500-amino-acid chain; its full sequence is tRNA (guanine(37)-N(1))-methyltransferase (500 aa).

S-adenosyl-L-methionine-binding positions include histidine 215, 253 to 254, 281 to 282, and asparagine 312; these read DL and DA. The interval 463–500 is disordered; it reads QIVAKKTPKPAPRPLPAKNKTTPDTNKMETDLTKLEMK. Positions 488–500 are enriched in basic and acidic residues; it reads NKMETDLTKLEMK.

This sequence belongs to the class I-like SAM-binding methyltransferase superfamily. TRM5/TYW2 family. Monomer.

The protein resides in the mitochondrion matrix. It is found in the nucleus. Its subcellular location is the cytoplasm. It carries out the reaction guanosine(37) in tRNA + S-adenosyl-L-methionine = N(1)-methylguanosine(37) in tRNA + S-adenosyl-L-homocysteine + H(+). Its function is as follows. Specifically methylates the N1 position of guanosine-37 in various cytoplasmic and mitochondrial tRNAs. Methylation is not dependent on the nature of the nucleoside 5' of the target nucleoside. This is the first step in the biosynthesis of wybutosine (yW), a modified base adjacent to the anticodon of tRNAs and required for accurate decoding. This is tRNA (guanine(37)-N(1))-methyltransferase from Anopheles darlingi (Mosquito).